The chain runs to 690 residues: Elongation factor G (690 aa).

Residues 8 to 283 (EDYRNFGIMA…AVVDYLPSPV (276 aa)) enclose the tr-type G domain. GTP contacts are provided by residues 17–24 (AHIDAGKT), 81–85 (DTPGH), and 135–138 (NKMD).

It belongs to the TRAFAC class translation factor GTPase superfamily. Classic translation factor GTPase family. EF-G/EF-2 subfamily.

The protein localises to the cytoplasm. Its function is as follows. Catalyzes the GTP-dependent ribosomal translocation step during translation elongation. During this step, the ribosome changes from the pre-translocational (PRE) to the post-translocational (POST) state as the newly formed A-site-bound peptidyl-tRNA and P-site-bound deacylated tRNA move to the P and E sites, respectively. Catalyzes the coordinated movement of the two tRNA molecules, the mRNA and conformational changes in the ribosome. The polypeptide is Elongation factor G (Rhodopseudomonas palustris (strain BisB5)).